Consider the following 219-residue polypeptide: Glutathione S-transferase 3 (219 aa).

The GST N-terminal domain occupies 3-82 (DEVVLLDTWA…YIDEVWNDKS (80 aa)). Glutathione-binding positions include S13, I54, and 66 to 67 (ES). A GST C-terminal domain is found at 88–216 (DPYKRSQARF…GLIVELQKTL (129 aa)).

Belongs to the GST superfamily. HSP26 family. As to quaternary structure, homodimer. degradation; (R)-lactate from methylglyoxal: step 1/2.

The catalysed reaction is RX + glutathione = an S-substituted glutathione + a halide anion + H(+). Functionally, conjugation of reduced glutathione to a wide number of exogenous and endogenous hydrophobic electrophiles. Involved in the detoxification of certain herbicides. This Glycine max (Soybean) protein is Glutathione S-transferase 3 (GST3).